The sequence spans 468 residues: DNA methyltransferase 1-associated protein 1 (468 aa).

Basic and acidic residues-rich tracts occupy residues 1-11 and 26-48; these read MATGADVRDIL and SKKD…LTFK. Residues 1–48 form a disordered region; that stretch reads MATGADVRDILELGGPEGDAASGTISKKDIINPDKKKSKKSSETLTFK. Lys27 participates in a covalent cross-link: Glycyl lysine isopeptide (Lys-Gly) (interchain with G-Cter in SUMO2). In terms of domain architecture, SANT spans 149–199; sequence DDAWTKAETDHLFDLSRRFDLRFVVIHDRYDHQQFKKRSVEDLKERYYHIC. Residue Lys214 forms a Glycyl lysine isopeptide (Lys-Gly) (interchain with G-Cter in SUMO2) linkage. A coiled-coil region spans residues 225–275; the sequence is RRKEQLERLYNRTPEQVAEEEYLLQELRKIEARKKEREKRSQDLQKLITAA. A compositionally biased stretch (basic and acidic residues) spans 258–267; that stretch reads KKEREKRSQD. Disordered regions lie at residues 258 to 305 and 411 to 468; these read KKER…PAVP and AVGP…AKKP. At Thr446 the chain carries Phosphothreonine. The residue at position 449 (Ser449) is a Phosphoserine.

As to quaternary structure, component of the NuA4 histone acetyltransferase complex which contains the catalytic subunit KAT5/TIP60 and the subunits EP400, TRRAP/PAF400, BRD8/SMAP, EPC1, DMAP1/DNMAP1, RUVBL1/TIP49, RUVBL2, ING3, actin, ACTL6A/BAF53A, MORF4L1/MRG15, MORF4L2/MRGX, MRGBP, YEATS4/GAS41, VPS72/YL1 and MEAF6. Component of a NuA4-related complex which contains EP400, TRRAP/PAF400, SRCAP, BRD8/SMAP, EPC1, DMAP1/DNMAP1, RUVBL1/TIP49, RUVBL2, actin, ACTL6A/BAF53A, VPS72 and YEATS4/GAS41. DMAP1 also forms a complex with DNMT1 and HDAC2. Throughout S phase it interacts directly with the N-terminus of DNMT1, which serves to recruit DMAP1 to replication foci. DMAP1 interacts with ING1, a component of the mSIN3A transcription repressor complex, although this interaction is not required for recruitment of ING1 to heterochromatin. Interacts directly with the transcriptional corepressor TSG101. Interacts with URI1. Interacts with the pro-apoptotic protein DAXX.

Its subcellular location is the nucleus. The protein localises to the cytoplasm. Functionally, involved in transcription repression and activation. Its interaction with HDAC2 may provide a mechanism for histone deacetylation in heterochromatin following replication of DNA at late firing origins. Can also repress transcription independently of histone deacetylase activity. May specifically potentiate DAXX-mediated repression of glucocorticoid receptor-dependent transcription. Component of the NuA4 histone acetyltransferase (HAT) complex which is involved in transcriptional activation of select genes principally by acetylation of nucleosomal histones H4 and H2A. This modification may both alter nucleosome - DNA interactions and promote interaction of the modified histones with other proteins which positively regulate transcription. This complex may be required for the activation of transcriptional programs associated with oncogene and proto-oncogene mediated growth induction, tumor suppressor mediated growth arrest and replicative senescence, apoptosis, and DNA repair. NuA4 may also play a direct role in DNA repair when recruited to sites of DNA damage. Participates in the nuclear localization of URI1 and increases its transcriptional corepressor activity. The chain is DNA methyltransferase 1-associated protein 1 (Dmap1) from Mus musculus (Mouse).